Here is a 362-residue protein sequence, read N- to C-terminus: Histidine biosynthesis bifunctional protein HisB (362 aa).

Positions methionine 1 to proline 173 are histidinol-phosphatase. The Nucleophile role is filled by aspartate 8. Mg(2+) contacts are provided by aspartate 8 and aspartate 10. The active-site Proton donor is the aspartate 10. The Zn(2+) site is built by cysteine 91, histidine 93, cysteine 99, and cysteine 101. Position 128 (aspartate 128) interacts with Mg(2+). Residues arginine 174 to leucine 362 form an imidazoleglycerol-phosphate dehydratase region.

It in the N-terminal section; belongs to the histidinol-phosphatase family. The protein in the C-terminal section; belongs to the imidazoleglycerol-phosphate dehydratase family. Requires Mg(2+) as cofactor. It depends on Zn(2+) as a cofactor.

It is found in the cytoplasm. It catalyses the reaction D-erythro-1-(imidazol-4-yl)glycerol 3-phosphate = 3-(imidazol-4-yl)-2-oxopropyl phosphate + H2O. It carries out the reaction L-histidinol phosphate + H2O = L-histidinol + phosphate. It participates in amino-acid biosynthesis; L-histidine biosynthesis; L-histidine from 5-phospho-alpha-D-ribose 1-diphosphate: step 6/9. The protein operates within amino-acid biosynthesis; L-histidine biosynthesis; L-histidine from 5-phospho-alpha-D-ribose 1-diphosphate: step 8/9. The sequence is that of Histidine biosynthesis bifunctional protein HisB from Haemophilus influenzae (strain 86-028NP).